The sequence spans 307 residues: Putative oxidoreductase YceM (307 aa).

Belongs to the Gfo/Idh/MocA family.

The chain is Putative oxidoreductase YceM (yceM) from Escherichia coli (strain K12).